Here is a 357-residue protein sequence, read N- to C-terminus: Glutamine synthetase root isozyme B (357 aa).

Positions 19 to 99 constitute a GS beta-grasp domain; that stretch reads IIAEYIWVGG…VICDVYTPAG (81 aa). One can recognise a GS catalytic domain in the interval 106–357; it reads KRYNAAKIFS…AETTILWKKS (252 aa).

It belongs to the glutamine synthetase family. In terms of assembly, homooctamer.

It is found in the cytoplasm. It carries out the reaction L-glutamate + NH4(+) + ATP = L-glutamine + ADP + phosphate + H(+). This Pisum sativum (Garden pea) protein is Glutamine synthetase root isozyme B (GS3B).